A 170-amino-acid polypeptide reads, in one-letter code: Large ribosomal subunit protein uL11 (170 aa).

The protein belongs to the universal ribosomal protein uL11 family. In terms of assembly, part of the ribosomal stalk of the 50S ribosomal subunit. Interacts with L10 and the large rRNA to form the base of the stalk. L10 forms an elongated spine to which L12 dimers bind in a sequential fashion forming a multimeric L10(L12)X complex.

Its function is as follows. Forms part of the ribosomal stalk which helps the ribosome interact with GTP-bound translation factors. The sequence is that of Large ribosomal subunit protein uL11 from Saccharolobus islandicus (strain M.16.27) (Sulfolobus islandicus).